Reading from the N-terminus, the 141-residue chain is Cystatin-SA (141 aa).

Positions 1–20 (MAWPLCTLLLLLATQAVALA) are cleaved as a signal peptide. The Secondary area of contact signature appears at 76–80 (QIVGG). 2 disulfide bridges follow: C94–C104 and C118–C138.

As to expression, expressed in submandibular and sublingual saliva but not in parotid saliva (at protein level). Expressed in submandibular gland and parotid gland.

It localises to the secreted. In terms of biological role, thiol protease inhibitor. In Homo sapiens (Human), this protein is Cystatin-SA (CST2).